The primary structure comprises 859 residues: MYILVWKKGQQIKTFHTLDEAAQFKAASNIDEAQMFSVTVASAISASGGSTEATNLRRLMYLSKSTNPEECNPQFLAEMARVAFIRNREIRVSGFLMYSSPFFIQVIVETDEDLDFLFAKISADPRHEMCIVLANGPGTGRMYGDWHMKDSHLDSITTHTAMKTILYQIARSFSSMWIYLQKSAANMLMLGKDPAAQPPERRSVVVTFIYLVEFCSIFSHPNLTEKTADVLSTFVYVCVKNVEGSGGNIAKFIPAICMTYWPIIRTKEALTAIQQISEDLAQLRSQQAQGSAVSLRYSQAGVHYGRGMQCNAGSRKSDFTLLGDCINTTSRIATLAKKLKTPLLFGFEVRCLLGDEKREEIEGAGIHQVKGRDKPVVVYQFPGPDLDVAMVRQKIEQFTPGRFRCQMPVVEYEALPISQRPPIFDDTPKSNPRPRTPGYGGRQRSDSLVDRLIRIANLSGFSESATGDTTLTTLTYISQATRPMSRLDLSAIMPTATRRNAQQSNIGTVLHENGLFVQTLEGPKDAVVNLYLRIRQDPRHTDVTTVHMAPLQERVYTSEWTLTLATEEMLATFPPVQDVLSQLAKSYTSLETYVPSTVVRYLTAGNNPRNLMPVSCGVVMLATDISSFTSLTEISSFTEVWMICNTFIDACTSAICQEGGEVIKLIGDCVTPYFPGNNADLAVAAAQELFIFCRQLREAFVDVLDVRGCVSCAVGMDYGQVVMAQCGLLRLSDYVAAGAVSAGVVEVEAITREVGYQFVVTVPDADRVQPQFRDYGIEPTPQAIGGLPCYGIVREVFDLPVESIKRGIKAMHAARSGEQPLTEPEQAKPDFRVSPGRDRHGVSGRRSNSSQGKGSIQVG.

The region spanning leucine 56–lysine 149 is the BLUF 1 domain. Positions arginine 420–arginine 444 are disordered. The BLUF 2 domain occupies leucine 471 to threonine 563. The interval alanine 814–glycine 859 is disordered. Basic and acidic residues predominate over residues glutamate 825–glycine 841. Residues arginine 845–glycine 859 show a composition bias toward polar residues.

Heterotetramer of two alpha and two beta subunits.

It localises to the cell projection. The protein localises to the cilium. Its subcellular location is the flagellum. In Euglena gracilis, this protein is Photoactivated adenylate cyclase subunit beta-like protein ST-.